A 716-amino-acid chain; its full sequence is MALTAALKAQIAAWYKALQEQIPDFIPRAPQRQMIADVAKTLAGEEGRHLAIEAPTGVGKTLSYLIPGIAIAREEQKTLVVSTANVALQDQIYSKDLPLLKKIIPDLKFTAAFGRGRYVCPRNLTALASTEPTQQDLLAFLDDELTPNNQEEQKRCAKLKGDLDTYKWDGLRDHTDIAIDDDLWRRLSTDKASCLNRNCYYYRECPFFVARREIQEAEVVVANHALVMAAMESEAVLPDPKNLLLVLDEGHHLPDVARDALEMSAEITAPWYRLQLDLFTKLVATCMEQFRPKTIPPLAIPERLNAHCEELYELIASLNNILNLYMPAGQEAEHRFAMGELPDEVLEICQRLAKLTEMLRGLAELFLNDLSEKTGSHDIVRLHRLILQMNRALGMFEAQSKLWRLASLAQSSGAPVTKWATREEREGQLHLWFHCVGIRVSDQLERLLWRSIPHIIVTSATLRSLNSFSRLQEMSGLKEKAGDRFVALDSPFNHCEQGKIVIPRMRVEPSIDNEEQHIAEMAAFFRKQVESKKHLGMLVLFASGRAMQRFLDYVTDLRLMLLVQGDQPRYRLVELHRKRVANGERSVLVGLQSFAEGLDLKGDLLSQVHIHKIAFPPIDSPVVITEGEWLKSLNRYPFEVQSLPSASFNLIQQVGRLIRSHGCWGEVVIYDKRLLTKNYGKRLLDALPVFPIEQPEVPEGIVKKKEKTKSPRRRRR.

Positions 1 to 114 (MALTAALKAQ…PDLKFTAAFG (114 aa)) are HD1 domain N-terminus. Positions 17–294 (ALQEQIPDFI…TCMEQFRPKT (278 aa)) constitute a Helicase ATP-binding domain. ATP contacts are provided by Ile26, Gln31, Lys60, and Thr61. The segment at 115–216 (RGRYVCPRNL…FFVARREIQE (102 aa)) is [4Fe-4S] domain. [4Fe-4S] cluster contacts are provided by Cys120, Cys194, Cys199, and Cys205. Residues 217–261 (AEVVVANHALVMAAMESEAVLPDPKNLLLVLDEGHHLPDVARDAL) are HD1 domain middle. The DEAH box motif lies at 248–251 (DEGH). Residues 262 to 438 (EMSAEITAPW…LHLWFHCVGI (177 aa)) form an arch domain region. Positions 439–491 (RVSDQLERLLWRSIPHIIVTSATLRSLNSFSRLQEMSGLKEKAGDRFVALDSP) are HD1 domain middle. The HD2 domain stretch occupies residues 492–716 (FNHCEQGKIV…KTKSPRRRRR (225 aa)). ATP is bound by residues Asp599, Arg656, and Arg659.

It belongs to the helicase family. DinG subfamily. Type 1 sub-subfamily. Monomer in solution. [4Fe-4S] cluster serves as cofactor. Requires Mg(2+) as cofactor.

The catalysed reaction is Couples ATP hydrolysis with the unwinding of duplex DNA at the replication fork by translocating in the 5'-3' direction. This creates two antiparallel DNA single strands (ssDNA). The leading ssDNA polymer is the template for DNA polymerase III holoenzyme which synthesizes a continuous strand.. It carries out the reaction ATP + H2O = ADP + phosphate + H(+). Its activity is regulated as follows. ATPase activity is 15-fold stimulated by single-stranded DNA (ssDNA). Reduction of the [4Fe-4S] cluster reversibly switches off helicase activity. Remains fully active after exposure to 100-fold excess of hydrogen peroxide, but the [4Fe-4S] cluster can be efficiently modified by nitric oxide (NO), forming the DinG-bound dinitrosyl iron complex with the concomitant inactivation of helicase activity. Helicase activity on G-quadruplex DNA is inhibited by porphyrin derivatives meso-tetra (N-methyl-4-pyridyl) porphine tetra tosylate (T4) and N-methyl mesoporphyrin IX (NMM). Helicase activity on forked duplexes is not inhibited by T4 or NMM. G-quadruplex ligands such as Pyridostatin, PhenDC3, BRACO-19 and Netropsin can alter recognition and unwinding of G-quadruplex DNAs; the effect is both ligand- and G-quadruplex DNA-specific. In terms of biological role, DNA-dependent ATPase and 5'-3' DNA helicase. Can also unwind DNA:RNA hybrid duplexes. Is active on D-loops, R-loops, and on forked structures. Unwinds G-quadruplex DNA in a 5'-3' direction; unwinding efficiency differs on different substrates. Does not appear to unwind replication forks or Holliday junctions. Translocates on single-stranded (ss)DNA with a 5'-3' polarity. In vitro at high concentrations also unwinds in a 3'-5' direction. May be involved in recombinational DNA repair and the resumption of replication after DNA damage. The [4Fe-4S] cluster is redox active at cellular potentials and is involved in DNA-mediated charge-transport signaling between DNA repair proteins from distinct pathways. DinG cooperates at long-range with endonuclease III, a base excision repair enzyme, using DNA charge transport to redistribute to regions of DNA damage. Binds 10-11 nucleotides of ssDNA in a positively-charged groove across the helicase domains. The protein is ATP-dependent DNA helicase DinG of Escherichia coli (strain K12).